The sequence spans 267 residues: Putative carboxymethylenebutenolidase (267 aa).

Catalysis depends on residues Cys137, Asp194, and His226.

Belongs to the dienelactone hydrolase family.

The enzyme catalyses 2-(5-oxo-2,5-dihydrofuran-2-ylidene)acetate + H2O = 4-oxohex-2-enedioate + H(+). In Yersinia pestis, this protein is Putative carboxymethylenebutenolidase.